The following is a 269-amino-acid chain: MLTPPRTVVRRDGGLYALERALQRRGFRHVAGADEAGRGACAGPLVAAAAVLPEGRRGEIDGLADSKLLTPASRERVYAEVVARALAYAVVVIPAAEVDLRGLHVCNLAAMRRALASLATAPEYVLTDGFGVDGLDVPGLAVWKGDRVAACVAAASVLAKVTRDRIMVELDTTFPGYGFAEHKGYITAEHSAALRERGPCPEHRFSYVNVATVSGRRGAPPRARRPLVVGLDEPMERSGAVEGTVGVALGERPWAAVSVGNDVAMEGGM.

Residues 28–222 (RHVAGADEAG…VSGRRGAPPR (195 aa)) form the RNase H type-2 domain. Residues aspartate 34, glutamate 35, and aspartate 128 each coordinate a divalent metal cation.

This sequence belongs to the RNase HII family. The cofactor is Mn(2+). Requires Mg(2+) as cofactor.

It is found in the cytoplasm. It catalyses the reaction Endonucleolytic cleavage to 5'-phosphomonoester.. Endonuclease that specifically degrades the RNA of RNA-DNA hybrids. The polypeptide is Ribonuclease HII (Salinispora arenicola (strain CNS-205)).